The sequence spans 390 residues: 4-hydroxycoumarin synthase 1 (390 aa).

Cys-161 is an active-site residue.

This sequence belongs to the thiolase-like superfamily. Chalcone/stilbene synthases family. As to quaternary structure, homodimer.

The catalysed reaction is 2-hydroxybenzoyl-CoA + malonyl-CoA = 4-hydroxycoumarin + CO2 + 2 CoA. Its function is as follows. Type III polyketide synthase involved preferentially in the biosynthesis of 4-hydroxycoumarin from salicoyl-CoA. Can also use benzoyl-CoA and malonyl-CoA to produce 3,5-dihydroxybiphenyl as a major product and benzoyldiacetic acid lactone as a minor side product. Can also use m-hydroxybenzoyl-CoA as substrate, producing m-hydroxybenzoyl diacetic acid lactone as a derailment product. No activity with p-hydroxybenzoyl-CoA, CoA-linked cinnamic acids or acetyl-CoA. This is 4-hydroxycoumarin synthase 1 (BIS2) from Sorbus aucuparia (European mountain ash).